A 598-amino-acid polypeptide reads, in one-letter code: Proline--tRNA ligase (598 aa).

The protein belongs to the class-II aminoacyl-tRNA synthetase family. ProS type 1 subfamily. As to quaternary structure, homodimer.

Its subcellular location is the cytoplasm. The catalysed reaction is tRNA(Pro) + L-proline + ATP = L-prolyl-tRNA(Pro) + AMP + diphosphate. Functionally, catalyzes the attachment of proline to tRNA(Pro) in a two-step reaction: proline is first activated by ATP to form Pro-AMP and then transferred to the acceptor end of tRNA(Pro). As ProRS can inadvertently accommodate and process non-cognate amino acids such as alanine and cysteine, to avoid such errors it has two additional distinct editing activities against alanine. One activity is designated as 'pretransfer' editing and involves the tRNA(Pro)-independent hydrolysis of activated Ala-AMP. The other activity is designated 'posttransfer' editing and involves deacylation of mischarged Ala-tRNA(Pro). The misacylated Cys-tRNA(Pro) is not edited by ProRS. This is Proline--tRNA ligase from Rippkaea orientalis (strain PCC 8801 / RF-1) (Cyanothece sp. (strain PCC 8801)).